The sequence spans 211 residues: Mediator-associated protein 2 (211 aa).

Residues 128–211 (QQKLVGSVTN…KSKKKVKKEE (84 aa)) form a disordered region. Residues 134–148 (SVTNSSKKSSNLTQS) show a composition bias toward low complexity. Phosphoserine is present on Ser173. Positions 189 to 198 (STSTVSGSSE) are enriched in low complexity. The segment covering 202–211 (KSKKKVKKEE) has biased composition (basic residues).

In terms of assembly, associated with the Mediator complex.

The protein resides in the nucleus. This Arabidopsis thaliana (Mouse-ear cress) protein is Mediator-associated protein 2.